The chain runs to 213 residues: MEAIWLYQFRLIVIGDSTVGKSCLIRRFTEGRFAQVSDPTVGVDFFSRLVEIEPGKRIKLQIWDTAGQERFRSITRAYYRNSVGGLLLFDITNRRSFQNVHEWLEETKVHVQPYQIVFVLVGHKCDLDTQRQVTRHEAEKLAAAYGMKYIETSARDAINVEKAFTDLTRDIYELVKRGDITIQEGWEGVKSGFVPNVVHSSEEVVKSERRCLC.

The GTP site is built by Ser17, Gly20, Lys21, Ser22, Cys23, Ser37, and Thr40. Residue Ser22 participates in Mg(2+) binding. The tract at residues 35–43 is switch-I; that stretch reads QVSDPTVGV. Mg(2+) is bound by residues Thr40 and Asp64. GTP-binding residues include Gly67, His123, Lys124, Asp126, Ala154, and Arg155. The segment at 67–83 is switch-II; it reads GQERFRSITRAYYRNSV. The residue at position 201 (Ser201) is a Phosphoserine. S-geranylgeranyl cysteine attachment occurs at residues Cys211 and Cys213. A Cysteine methyl ester modification is found at Cys213.

This sequence belongs to the small GTPase superfamily. Rab family. In terms of assembly, interacts (GDP-bound) with C9orf72; C9orf72 in complex with SMCR8 acts as a GEF for RAB39B. Interacts (in GTP-bound form) with PICK1 (via PDZ domain); a PICK1 homodimer may allow simultaneous association of RAB39B and GRIA2 to PICK1 which is involved in GRIA2 trafficking. Interacts with isoform c of RASSF1; the interaction is strong. Interacts with isoform a of RASSF1; the interaction is weak. Interacts with the DLG4/PSD-95. Interacts (GTP-bound) with HOPS complex components VPS39 and VPS41. The cofactor is Mg(2+).

It is found in the cell membrane. The protein localises to the cytoplasmic vesicle membrane. Its subcellular location is the golgi apparatus. The protein resides in the cytoplasmic vesicle. It localises to the autophagosome membrane. It is found in the autolysosome membrane. It catalyses the reaction GTP + H2O = GDP + phosphate + H(+). Its activity is regulated as follows. Regulated by guanine nucleotide exchange factors (GEFs) including C9orf72-SMCR8 complex, which promote the exchange of bound GDP for free GTP. Regulated by GTPase activating proteins (GAPs) which increase the GTP hydrolysis activity. Inhibited by GDP dissociation inhibitors (GDIs). The small GTPases Rab are key regulators of intracellular membrane trafficking, from the formation of transport vesicles to their fusion with membranes. Rabs cycle between an inactive GDP-bound form and an active GTP-bound form that is able to recruit to membranes different sets of downstream effectors directly responsible for vesicle formation, movement, tethering and fusion. RAB39B is involved in autophagy and may function in autophagosome formation. Binds downstream effector PICK1 to ensure selectively GRIA2 exit from the endoplasmic reticulum to the Golgi and to regulate AMPAR composition at the post-synapses and thus synaptic transmission. May regulate the homeostasis of SNCA/alpha-synuclein. This chain is Ras-related protein Rab-39B (RAB39B), found in Bos taurus (Bovine).